Here is an 871-residue protein sequence, read N- to C-terminus: Tegument protein UL47 homolog (871 aa).

Residues 1 to 212 (MDQHHGARGG…DEDDMEVIRD (212 aa)) are disordered. Positions 13-33 (IRRPRRSIESRSHPFRATGNT) match the Nuclear localization signal motif. 2 stretches are compositionally biased toward polar residues: residues 30–41 (TGNTQRTYSTPR) and 59–81 (EQAS…STSF). Acidic residues-rich tracts occupy residues 114–134 (SSSE…EEDQ), 146–155 (SSDENDEEED), and 185–207 (SESE…EDDM).

The protein belongs to the alphaherpesvirinae HHV-1 UL47 family. Interacts with US3 kinase. Interacts with UL31 and UL34; these interactions seem important for efficient virion nuclear egress. Interacts with UL41/VHS. In terms of processing, phosphorylated by US3. This phosphorylation is required for proper nuclear localization.

It is found in the virion tegument. The protein resides in the host nucleus. The protein localises to the host cytoplasm. In terms of biological role, tegument protein that can bind to various RNA transcripts. Plays a role in the attenuation of selective viral and cellular mRNA degradation by modulating the activity of host shutoff RNase UL41/VHS. Also plays a role in the primary envelopment of virions in the perinuclear space, probably by interacting with two nuclear egress proteins UL31 and UL34. This chain is Tegument protein UL47 homolog, found in Equine herpesvirus 1 (strain V592) (EHV-1).